The chain runs to 208 residues: ER membrane protein complex subunit 8/9 homolog (208 aa).

Residues 11 to 146 form the MPN domain; that stretch reads YEISQNAYIK…ERSPVMQLCV (136 aa).

It belongs to the EMC8/EMC9 family.

This is ER membrane protein complex subunit 8/9 homolog (EMB2731) from Arabidopsis thaliana (Mouse-ear cress).